We begin with the raw amino-acid sequence, 570 residues long: MLTDMEISRRAHLKDIAQLGAEFGLLPEEMQLFGNTKAKVDLQVQQRLAGQPKGKLIIVTAVTPTPHGEGKTVTTIGLTQSLKALGNKVCACIRQPSMGPVFGVKGGAAGGGYAQVVPMQELNLHLTGDIHAVSSAHNLGAAAIASRLYHEMRLGKAEFERQSGLSYLDIDPKGIRWHRVVDHNDRCLREIEVGLGENNGPAYTSGFDITAASELMAILALSRNLTDMRVRIGKLVLALNRQGEAVSADELGVAGAMTAIMADAVKPTLMQTLNGAPCLIHAGPFANIAHGNSSVIADDIALKLADFVVTEGGFGSDMGFEKFCNIKARQSGLIPSAAVLVTTLKALKANSGLASDTDINAPDQARLEAGFANLNWHINNVVQYGLPVVVAINRFASDTDAELNWLMEAVRGTAAFGCELSEAFSQGEDGAMALAQTVIRACEQPSEFRLLYPDNMELEAKLSTLAELGYGAAGINLSAVAKQQLQELSALGYAHLPVCMAKTPLSISHDPQLKGVPQGFIVPVRELVLNAGAGFITALVGNVMTMPGLGLTPGYLKIDIDVDGEIIGLG.

Thr-65–Thr-72 contributes to the ATP binding site.

This sequence belongs to the formate--tetrahydrofolate ligase family.

The enzyme catalyses (6S)-5,6,7,8-tetrahydrofolate + formate + ATP = (6R)-10-formyltetrahydrofolate + ADP + phosphate. The protein operates within one-carbon metabolism; tetrahydrofolate interconversion. The protein is Formate--tetrahydrofolate ligase of Shewanella oneidensis (strain ATCC 700550 / JCM 31522 / CIP 106686 / LMG 19005 / NCIMB 14063 / MR-1).